The primary structure comprises 874 residues: MIDTSTITNPQTLPVEAITQENLRNTLEQFAEQQKQQFIQHRPVTDLVLSRSTFIDKLLIRLWEHYEVNQYPDIALVAVGGYGRGELHPLSDVDILILSAQPLSDETGRIVSKFLTFLWDLRLEVGHSVRTIDDCIEIGNDDLTVATNLTEARILCGSEDVFQCLQERINAGNFWPSEDFYRAKLEEQKTRHARYHDTTYNLEPDIKSSPGGLRDIHTLSWVARRHFGATSLLEMSRFGFLTDAEYRELVECQDSLWRIRFALHIELRRYDNRLTFSHQPSVAENLGYTGEGNRGVEMMMKEFYRTLRRVLELNKMLLQLFDQAILDNGKTVETIQLSDDFQIRGHLIEATKPALFQARPETILDMFLHIAQNGDIEGIAAPTLRQLRTARQRLNVFLVDIPEAREKFMELVRQPNTLQKAFRLMHRHGVLSAYLPQWSQIVGQMQFDLFHVYTVDEHSVRLIKNLNKFNDPENRERHPICCEVYPRIIKKELLTIAAIFHDIAKGRGGDHSELGAIEARKFCIQHGLSRPETNLIAWLVQKHLLMSVTAQRRDIYDPEVVAEFAKEVRDEERLDYLICLTVADICATNQELWNSWKRTLLAELYYSTQKALRRGLENTPDVRDRIRHNQQLSSAILRGKGFAPREIEVLWKRFKADYFLRHTHKQLAWHAEALLTHDHDKPLILLSKKATRGGTEVFVYNKDKAKLFAIVVSELDKKNLSVHDAQIMNSKDGYTLDTFMVLDPSGKTIPENRHNTIRRALVNALTKMKSERKNKRAPRKLMHFNVKTQVDFLPTKTGKKTTMELIALDTPGLLARIGAVFAKQKVSLQAAKITTIGERAEDFFILVNEHGSPLTEEHQQALKEALIIKLTPQD.

The interval 1–336 is uridylyltransferase; that stretch reads MIDTSTITNP…DNGKTVETIQ (336 aa). Residues 337 to 695 are uridylyl-removing; sequence LSDDFQIRGH…LSKKATRGGT (359 aa). In terms of domain architecture, HD spans 455-577; it reads VDEHSVRLIK…VRDEERLDYL (123 aa). ACT domains are found at residues 696–779 and 802–874; these read EVFV…RAPR and TMEL…TPQD.

This sequence belongs to the GlnD family. The cofactor is Mg(2+).

It catalyses the reaction [protein-PII]-L-tyrosine + UTP = [protein-PII]-uridylyl-L-tyrosine + diphosphate. The enzyme catalyses [protein-PII]-uridylyl-L-tyrosine + H2O = [protein-PII]-L-tyrosine + UMP + H(+). With respect to regulation, uridylyltransferase (UTase) activity is inhibited by glutamine, while glutamine activates uridylyl-removing (UR) activity. Modifies, by uridylylation and deuridylylation, the PII regulatory proteins (GlnB and homologs), in response to the nitrogen status of the cell that GlnD senses through the glutamine level. Under low glutamine levels, catalyzes the conversion of the PII proteins and UTP to PII-UMP and PPi, while under higher glutamine levels, GlnD hydrolyzes PII-UMP to PII and UMP (deuridylylation). Thus, controls uridylylation state and activity of the PII proteins, and plays an important role in the regulation of nitrogen assimilation and metabolism. This is Bifunctional uridylyltransferase/uridylyl-removing enzyme from Photobacterium profundum (strain SS9).